We begin with the raw amino-acid sequence, 228 residues long: uncharacterized protein (228 aa).

Positions 7–228 (VEVHHLKKSV…LVNGQLQEEA (222 aa)) constitute an ABC transporter domain. 43-50 (GESGSGKS) is an ATP binding site.

Belongs to the ABC transporter superfamily.

This is an uncharacterized protein from Escherichia coli O157:H7.